The sequence spans 353 residues: Photosystem II D2 protein (353 aa).

N-acetylthreonine is present on Thr-2. Thr-2 carries the phosphothreonine modification. A helical transmembrane segment spans residues 41–61 (CAYFALGGWFTGTTFVTSWYT). Residue His-118 coordinates chlorophyll a. The helical transmembrane segment at 125–141 (GFMLRQFELARSVQLRP) threads the bilayer. Positions 130 and 143 each coordinate pheophytin a. Residues 153–166 (VFVSVFLIYPLGQS) traverse the membrane as a helical segment. Position 198 (His-198) interacts with chlorophyll a. A helical transmembrane segment spans residues 208–228 (AALLCAIHGATVENTLFEDGD). Residues His-215 and Phe-262 each contribute to the a plastoquinone site. Residue His-215 coordinates Fe cation. Fe cation is bound at residue His-269. A helical membrane pass occupies residues 279 to 295 (GLWMSALGVVGLALNLR).

Belongs to the reaction center PufL/M/PsbA/D family. In terms of assembly, PSII is composed of 1 copy each of membrane proteins PsbA, PsbB, PsbC, PsbD, PsbE, PsbF, PsbH, PsbI, PsbJ, PsbK, PsbL, PsbM, PsbT, PsbX, PsbY, PsbZ, Psb30/Ycf12, at least 3 peripheral proteins of the oxygen-evolving complex and a large number of cofactors. It forms dimeric complexes. It depends on The D1/D2 heterodimer binds P680, chlorophylls that are the primary electron donor of PSII, and subsequent electron acceptors. It shares a non-heme iron and each subunit binds pheophytin, quinone, additional chlorophylls, carotenoids and lipids. There is also a Cl(-1) ion associated with D1 and D2, which is required for oxygen evolution. The PSII complex binds additional chlorophylls, carotenoids and specific lipids. as a cofactor.

The protein resides in the plastid. The protein localises to the chloroplast thylakoid membrane. It carries out the reaction 2 a plastoquinone + 4 hnu + 2 H2O = 2 a plastoquinol + O2. Photosystem II (PSII) is a light-driven water:plastoquinone oxidoreductase that uses light energy to abstract electrons from H(2)O, generating O(2) and a proton gradient subsequently used for ATP formation. It consists of a core antenna complex that captures photons, and an electron transfer chain that converts photonic excitation into a charge separation. The D1/D2 (PsbA/PsbD) reaction center heterodimer binds P680, the primary electron donor of PSII as well as several subsequent electron acceptors. D2 is needed for assembly of a stable PSII complex. This chain is Photosystem II D2 protein, found in Platanus occidentalis (Sycamore).